Here is a 173-residue protein sequence, read N- to C-terminus: Translation initiation factor IF-3 (173 aa).

It belongs to the IF-3 family. Monomer.

It is found in the cytoplasm. Its function is as follows. IF-3 binds to the 30S ribosomal subunit and shifts the equilibrium between 70S ribosomes and their 50S and 30S subunits in favor of the free subunits, thus enhancing the availability of 30S subunits on which protein synthesis initiation begins. This Ehrlichia ruminantium (strain Gardel) protein is Translation initiation factor IF-3.